The primary structure comprises 408 residues: S100P-binding protein (408 aa).

Disordered stretches follow at residues Met1–Pro111, Lys162–Pro234, and Val271–His291. The segment covering Ser28–Asp59 has biased composition (acidic residues). 2 stretches are compositionally biased toward basic and acidic residues: residues Asp77–Arg86 and Lys162–Gly185. Ser187 bears the Phosphoserine mark. The segment covering Pro188–Pro234 has biased composition (polar residues). Residues Val280–His291 show a composition bias toward basic and acidic residues.

Interacts with S100P. Expressed in brain, spleen, and lung. Not detected in pancreas or liver. In pancreas, expressed predominantly in islet cells and to a lesser extent in acinar cells, but not expressed in ductal cells. Up-regulated in various pancreatic ductal adenocarcinomas and pancreatic intraepithelial neoplasias. Detected in pancreatic ductal adenocarcinoma cells (at protein level). Not detected in non-neoplastic ductal epithelium (at protein level).

The protein resides in the nucleus. The sequence is that of S100P-binding protein from Homo sapiens (Human).